Here is a 465-residue protein sequence, read N- to C-terminus: Serine hydroxymethyltransferase (465 aa).

Lysine 241 carries the post-translational modification N6-(pyridoxal phosphate)lysine.

It belongs to the SHMT family. Homotetramer. The cofactor is pyridoxal 5'-phosphate. In terms of tissue distribution, highest expression in the ovary and testis. 6- to 7-fold lower expression in hemocyte, silk gland, midgut and fat body.

The catalysed reaction is (6R)-5,10-methylene-5,6,7,8-tetrahydrofolate + glycine + H2O = (6S)-5,6,7,8-tetrahydrofolate + L-serine. It functions in the pathway one-carbon metabolism; tetrahydrofolate interconversion. Interconversion of serine and glycine. This Bombyx mori (Silk moth) protein is Serine hydroxymethyltransferase (692975).